The primary structure comprises 311 residues: Meteorin-like protein (311 aa).

Positions 1 to 45 (MRGAVWAARRRAGQQWPRSPGPGPGPPPPPPLLLLLLLLLGGASA) are cleaved as a signal peptide. A disulfide bridge links cysteine 52 with cysteine 75. Residue asparagine 103 is glycosylated (N-linked (GlcNAc...) asparagine). 4 disulfide bridges follow: cysteine 107-cysteine 143, cysteine 188-cysteine 260, cysteine 191-cysteine 284, and cysteine 201-cysteine 306.

Belongs to the meteorin family. N-glycosylated. As to expression, highly expressed in subcutaneous adipose tissue.

The protein resides in the secreted. In terms of biological role, hormone induced following exercise or cold exposure that promotes energy expenditure. Induced either in the skeletal muscle after exercise or in adipose tissue following cold exposure and is present in the circulation. Able to stimulate energy expenditure associated with the browning of the white fat depots and improves glucose tolerance. Does not promote an increase in a thermogenic gene program via direct action on adipocytes, but acts by stimulating several immune cell subtypes to enter the adipose tissue and activate their prothermogenic actions. Stimulates an eosinophil-dependent increase in IL4 expression and promotes alternative activation of adipose tissue macrophages, which are required for the increased expression of the thermogenic and anti-inflammatory gene programs in fat. Required for some cold-induced thermogenic responses, suggesting a role in metabolic adaptations to cold temperatures. The chain is Meteorin-like protein (Metrnl) from Mus musculus (Mouse).